The primary structure comprises 672 residues: DNA ligase (672 aa).

NAD(+) is bound by residues 35–39, 84–85, and glutamate 116; these read DAEYD and SL. The active-site N6-AMP-lysine intermediate is lysine 118. NAD(+) is bound by residues arginine 139, glutamate 179, lysine 295, and lysine 319. Cysteine 413, cysteine 416, cysteine 431, and cysteine 436 together coordinate Zn(2+). In terms of domain architecture, BRCT spans 593–672; that stretch reads PRSAPLTGKT…EEFLRLAGKI (80 aa).

This sequence belongs to the NAD-dependent DNA ligase family. LigA subfamily. It depends on Mg(2+) as a cofactor. The cofactor is Mn(2+).

The catalysed reaction is NAD(+) + (deoxyribonucleotide)n-3'-hydroxyl + 5'-phospho-(deoxyribonucleotide)m = (deoxyribonucleotide)n+m + AMP + beta-nicotinamide D-nucleotide.. DNA ligase that catalyzes the formation of phosphodiester linkages between 5'-phosphoryl and 3'-hydroxyl groups in double-stranded DNA using NAD as a coenzyme and as the energy source for the reaction. It is essential for DNA replication and repair of damaged DNA. The sequence is that of DNA ligase from Syntrophus aciditrophicus (strain SB).